The sequence spans 92 residues: Large ribosomal subunit protein bL25 (92 aa).

It belongs to the bacterial ribosomal protein bL25 family. As to quaternary structure, part of the 50S ribosomal subunit; part of the 5S rRNA/L5/L18/L25 subcomplex. Contacts the 5S rRNA. Binds to the 5S rRNA independently of L5 and L18.

In terms of biological role, this is one of the proteins that binds to the 5S RNA in the ribosome where it forms part of the central protuberance. In Aliivibrio salmonicida (strain LFI1238) (Vibrio salmonicida (strain LFI1238)), this protein is Large ribosomal subunit protein bL25.